The chain runs to 443 residues: Thymidine phosphorylase (443 aa).

It belongs to the thymidine/pyrimidine-nucleoside phosphorylase family. As to quaternary structure, homodimer.

The catalysed reaction is thymidine + phosphate = 2-deoxy-alpha-D-ribose 1-phosphate + thymine. It participates in pyrimidine metabolism; dTMP biosynthesis via salvage pathway; dTMP from thymine: step 1/2. In terms of biological role, the enzymes which catalyze the reversible phosphorolysis of pyrimidine nucleosides are involved in the degradation of these compounds and in their utilization as carbon and energy sources, or in the rescue of pyrimidine bases for nucleotide synthesis. The protein is Thymidine phosphorylase of Aliivibrio fischeri (strain ATCC 700601 / ES114) (Vibrio fischeri).